The following is a 746-amino-acid chain: Polyribonucleotide nucleotidyltransferase (746 aa).

Positions 515 and 521 each coordinate Mg(2+). A KH domain is found at 581-640 (PRVIAVKIPVDKIGEVIGPKGKMINQIQEDTGADISIEDDGTVYIGATNGPSADAARSAI). Residues 652-724 (GERYLGTVVK…DRGKLSLSPV (73 aa)) form the S1 motif domain.

This sequence belongs to the polyribonucleotide nucleotidyltransferase family. Mg(2+) is required as a cofactor.

The protein resides in the cytoplasm. The catalysed reaction is RNA(n+1) + phosphate = RNA(n) + a ribonucleoside 5'-diphosphate. In terms of biological role, involved in mRNA degradation. Catalyzes the phosphorolysis of single-stranded polyribonucleotides processively in the 3'- to 5'-direction. In Renibacterium salmoninarum (strain ATCC 33209 / DSM 20767 / JCM 11484 / NBRC 15589 / NCIMB 2235), this protein is Polyribonucleotide nucleotidyltransferase.